Reading from the N-terminus, the 314-residue chain is Olfactory receptor 9Q2 (314 aa).

At 1 to 25 (MAERNYTVVTEFFLTAFTEHLQWRV) the chain is on the extracellular side. Asn5 is a glycosylation site (N-linked (GlcNAc...) asparagine). The helical transmembrane segment at 26–46 (PLFLIFLSFYLATMLGNTGMI) threads the bilayer. Over 47–54 (LLIRGDRR) the chain is Cytoplasmic. A helical transmembrane segment spans residues 55 to 75 (LHTPMYFFLSHLSLVDICYSS). The Extracellular portion of the chain corresponds to 76–99 (AIIPQMLAVLWEHGTTISQARCAA). A disulfide bridge links Cys97 with Cys189. A helical transmembrane segment spans residues 100-120 (QFFLFTFFASIDCYLLAIMAY). At 121–139 (DRYTAVCQPLLYVTIITEK) the chain is on the cytoplasmic side. A helical membrane pass occupies residues 140–160 (ARWGLVTGAYVAGFFSAFVRT). The Extracellular segment spans residues 161–197 (VTAFTLSFCGNNEINFIFCDLPPLLKLSCGDSYTQEV). Residues 198–217 (VIIVFALFVMPACILVILVS) form a helical membrane-spanning segment. Residues 218-237 (YLFIIVAILQIHSAGGRAKT) lie on the Cytoplasmic side of the membrane. A helical transmembrane segment spans residues 238 to 258 (FSTCASHLTAVALFFGTLIFM). The Extracellular segment spans residues 259–271 (YLRDNTGQSSEGD). A helical transmembrane segment spans residues 272–292 (RVVSVLYTVVTPMLNPLIYSL). Residues 293–314 (RNKEVKEATRKALSKSKPARRP) are Cytoplasmic-facing.

The protein belongs to the G-protein coupled receptor 1 family.

The protein localises to the cell membrane. Its function is as follows. Odorant receptor. The protein is Olfactory receptor 9Q2 (OR9Q2) of Homo sapiens (Human).